The following is a 379-amino-acid chain: Anhydro-N-acetylmuramic acid kinase (379 aa).

Position 9-16 (9-16) interacts with ATP; it reads GTSVDGID.

Belongs to the anhydro-N-acetylmuramic acid kinase family.

The enzyme catalyses 1,6-anhydro-N-acetyl-beta-muramate + ATP + H2O = N-acetyl-D-muramate 6-phosphate + ADP + H(+). The protein operates within amino-sugar metabolism; 1,6-anhydro-N-acetylmuramate degradation. It participates in cell wall biogenesis; peptidoglycan recycling. Functionally, catalyzes the specific phosphorylation of 1,6-anhydro-N-acetylmuramic acid (anhMurNAc) with the simultaneous cleavage of the 1,6-anhydro ring, generating MurNAc-6-P. Is required for the utilization of anhMurNAc either imported from the medium or derived from its own cell wall murein, and thus plays a role in cell wall recycling. This Picosynechococcus sp. (strain ATCC 27264 / PCC 7002 / PR-6) (Agmenellum quadruplicatum) protein is Anhydro-N-acetylmuramic acid kinase.